The chain runs to 431 residues: uncharacterized protein (431 aa).

3 disordered regions span residues 31-55, 257-291, and 365-431; these read VPASRIPEGGNVSASQPNGAHQAGV, QNGGRLSVSKDSDVYPTNGYGNGNQNRQNRSPKQD, and FQSP…HRKA. Polar residues predominate over residues 42-55; that stretch reads VSASQPNGAHQAGV. The segment covering 412–425 has biased composition (basic and acidic residues); sequence VEYRRGRSLRESRE.

This is an uncharacterized protein from Arabidopsis thaliana (Mouse-ear cress).